Reading from the N-terminus, the 362-residue chain is Adenosine deaminase (362 aa).

Residues H19 and H21 each contribute to the Zn(2+) site. Positions 21, 23, and 181 each coordinate substrate. Position 208 (H208) interacts with Zn(2+). E211 acts as the Proton donor in catalysis. Position 300 (D300) interacts with Zn(2+).

The protein belongs to the metallo-dependent hydrolases superfamily. Adenosine and AMP deaminases family. Adenosine deaminase subfamily. It depends on Zn(2+) as a cofactor.

It catalyses the reaction adenosine + H2O + H(+) = inosine + NH4(+). It carries out the reaction 2'-deoxyadenosine + H2O + H(+) = 2'-deoxyinosine + NH4(+). Its function is as follows. Catalyzes the hydrolytic deamination of adenosine and 2-deoxyadenosine. The protein is Adenosine deaminase of Mycobacterium marinum (strain ATCC BAA-535 / M).